A 108-amino-acid polypeptide reads, in one-letter code: uncharacterized protein (108 aa).

A lipid anchor (N-myristoyl glycine; by host) is attached at glycine 2.

This is an uncharacterized protein from Acanthamoeba polyphaga (Amoeba).